A 370-amino-acid polypeptide reads, in one-letter code: Succinoglycan biosynthesis protein ExoH (370 aa).

A run of 10 helical transmembrane segments spans residues isoleucine 14–phenylalanine 34, valine 46–tyrosine 66, threonine 88–glutamine 108, leucine 144–valine 164, valine 170–lysine 190, isoleucine 193–leucine 213, phenylalanine 216–tyrosine 236, leucine 244–isoleucine 264, glycine 282–tryptophan 302, and leucine 307–alanine 327. The segment at alanine 350–arginine 370 is disordered.

It belongs to the acyltransferase 3 family.

It is found in the cell membrane. Its pathway is glycan metabolism; exopolysaccharide biosynthesis. Functionally, required for the succinyl modification of the seventh sugar (glucose) of the octasaccharide subunit of succinoglycan (EPS I). The protein is Succinoglycan biosynthesis protein ExoH (exoH) of Rhizobium meliloti (strain 1021) (Ensifer meliloti).